Here is a 272-residue protein sequence, read N- to C-terminus: 2-amino-3,7-dideoxy-D-threo-hept-6-ulosonate synthase (272 aa).

The active-site Proton acceptor is Asp-33. 1-deoxy-D-threo-hexo-2,5-diulose 6-phosphate contacts are provided by residues 33–37 (DHGVS) and 153–155 (YPR). The Proton donor role is filled by Tyr-153. The active-site Schiff-base intermediate with substrate is Lys-184. 1-deoxy-D-threo-hexo-2,5-diulose 6-phosphate contacts are provided by residues 209-210 (GG) and 237-238 (GR).

The protein belongs to the DeoC/FbaB aldolase family. ADHS subfamily. Homodecamer.

It carries out the reaction 1-deoxy-D-threo-hexo-2,5-diulose 6-phosphate + L-aspartate 4-semialdehyde = 2,3-dioxopropyl phosphate + 2-amino-2,3,7-trideoxy-D-lyxo-hept-6-ulosonate. Catalyzes a transaldol reaction between 6-deoxy-5-ketofructose 1-phosphate (DKFP) and L-aspartate semialdehyde (ASA) with an elimination of hydroxypyruvaldehyde phosphate to yield 2-amino-3,7-dideoxy-D-threo-hept-6-ulosonate (ADH). Plays a key role in an alternative pathway of the biosynthesis of 3-dehydroquinate (DHQ), which is involved in the canonical pathway for the biosynthesis of aromatic amino acids. The polypeptide is 2-amino-3,7-dideoxy-D-threo-hept-6-ulosonate synthase (Methanococcus maripaludis (strain C5 / ATCC BAA-1333)).